The sequence spans 213 residues: MTIAKIEDAIEAISRGEMVIVVDDEDRENEGDIIAASDSITPQQIAFMMNHARGLVCVAMPGERLDALDIPLMVSRNTESLKTAFTVSVDYIPGTTTGISAADRAKTVRALVSEGSRPEDFARPGHIFPLRANPEGVLGRTGHTEAAVDLCRLAGKFPSGTICEVANDDGTMARLPQLEIFAERHGLLVVTIKDLVSYLKGEVVEEMVQKQVA.

D-ribulose 5-phosphate is bound by residues 27 to 28, D32, 140 to 144, and E164; these read RE and RTGHT. Residue E28 participates in Mg(2+) binding. Mg(2+) is bound at residue H143.

The protein belongs to the DHBP synthase family. In terms of assembly, homodimer. Mg(2+) serves as cofactor. Mn(2+) is required as a cofactor.

The enzyme catalyses D-ribulose 5-phosphate = (2S)-2-hydroxy-3-oxobutyl phosphate + formate + H(+). It participates in cofactor biosynthesis; riboflavin biosynthesis; 2-hydroxy-3-oxobutyl phosphate from D-ribulose 5-phosphate: step 1/1. Catalyzes the conversion of D-ribulose 5-phosphate to formate and 3,4-dihydroxy-2-butanone 4-phosphate. The chain is 3,4-dihydroxy-2-butanone 4-phosphate synthase from Agrobacterium fabrum (strain C58 / ATCC 33970) (Agrobacterium tumefaciens (strain C58)).